The chain runs to 995 residues: DExH-box ATP-dependent RNA helicase DExH10 (995 aa).

The tract at residues Met-1–Ala-42 is disordered. At Ser-2 the chain carries N-acetylserine. Over residues Thr-10 to Glu-26 the composition is skewed to basic and acidic residues. Positions Val-90 to Cys-246 constitute a Helicase ATP-binding domain. Ala-103 to Thr-110 serves as a coordination point for ATP. The DEIH box signature appears at Asp-194 to His-197. Residues Asp-290–Gly-318 form a disordered region. The span at Lys-307–Gly-318 shows a compositional bias: gly residues. Residues Asp-323–Leu-524 form the Helicase C-terminal domain.

It belongs to the DExH box helicase family. SKI2 subfamily. Expressed in inflorescences, leaves, stems, and roots.

It localises to the nucleus. Its subcellular location is the nucleoplasm. It catalyses the reaction ATP + H2O = ADP + phosphate + H(+). ATP-dependent RNA helicase that associates with the RNA exosome complex, with the cap binding complex (CBC) and with the NEXT-like complex. Involved in the degradation of a large number of non-coding nuclear exosome substrates such as snoRNA and miRNA precursors, incompletely spliced mRNAs, and spurious transcripts produced from pseudogenes and intergenic regions. Involved in the maintenance of homeotic B and C gene expression in the reproductive whorls. Regulates floral organ spacing and identity, probably through the regulation of protein synthesis or mRNA degradation. This Arabidopsis thaliana (Mouse-ear cress) protein is DExH-box ATP-dependent RNA helicase DExH10.